The chain runs to 99 residues: Integration host factor subunit alpha (99 aa).

Residues 51–71 form a disordered region; that stretch reads NFDLRDKNQRPGRNPKTGEDI.

The protein belongs to the bacterial histone-like protein family. Heterodimer of an alpha and a beta chain.

This protein is one of the two subunits of integration host factor, a specific DNA-binding protein that functions in genetic recombination as well as in transcriptional and translational control. This Dickeya dadantii (strain 3937) (Erwinia chrysanthemi (strain 3937)) protein is Integration host factor subunit alpha (ihfA).